The sequence spans 260 residues: tRNA pseudouridine synthase A (260 aa).

Asp-52 (nucleophile) is an active-site residue. Tyr-110 provides a ligand contact to substrate.

Belongs to the tRNA pseudouridine synthase TruA family. In terms of assembly, homodimer.

It carries out the reaction uridine(38/39/40) in tRNA = pseudouridine(38/39/40) in tRNA. Functionally, formation of pseudouridine at positions 38, 39 and 40 in the anticodon stem and loop of transfer RNAs. This is tRNA pseudouridine synthase A from Spiroplasma kunkelii.